A 558-amino-acid polypeptide reads, in one-letter code: MRSDRVKAGFERAPHRSLMRATGMTDEDLSRPFIAICNSFNEVIPGHVHLNRVAALIKEEVRKAGGTPVEFNLPGVCDGIAMGHGGMKFSLASRELIADSVETMLSAHAFDAMICIPNCDKIVPGMIMGALRCNIPTIFCSGGPMAAGMAEDGTVLDLNSVFEAVARFKAGKINEEELHSLECRACPGAGSCSGMFTANSMNCLSEVIGLALPGNGSLLATSEERKEFWKQTARRAVEMAKADGPLPRDIVTRDAIDNAFTIDMAMGGSSNTVLHTLAIAREAGVEYDLQRINDISRRTPNICKVAPSSRFHMQDVLRAGGVSAIIHEIARIPGALHLDAMTVSGKTLGETVEGCGIADETVIHPLENAYSRDGGLAILFGNLAEEGAVVKKAGVHPNMMSFRGPAVIFESQEEACEGILAGKVKSGDVVVIRNEGPKGGPGMQEMLAPTSYIMGQGLGAEVALITDGRFSGATHGACIGHISPEAAEGGLIGLLRNGDIIEYSIPDRTLNVCLSEEEIARRRADWKPTYNRVSSSWLSRYRQLATNASKGAVLRRGE.

D78 serves as a coordination point for Mg(2+). C119 contributes to the [2Fe-2S] cluster binding site. Residues D120 and K121 each coordinate Mg(2+). An N6-carboxylysine modification is found at K121. A [2Fe-2S] cluster-binding site is contributed by C192. E445 contributes to the Mg(2+) binding site. S471 serves as the catalytic Proton acceptor.

It belongs to the IlvD/Edd family. As to quaternary structure, homodimer. [2Fe-2S] cluster serves as cofactor. The cofactor is Mg(2+).

It catalyses the reaction (2R)-2,3-dihydroxy-3-methylbutanoate = 3-methyl-2-oxobutanoate + H2O. It carries out the reaction (2R,3R)-2,3-dihydroxy-3-methylpentanoate = (S)-3-methyl-2-oxopentanoate + H2O. It participates in amino-acid biosynthesis; L-isoleucine biosynthesis; L-isoleucine from 2-oxobutanoate: step 3/4. The protein operates within amino-acid biosynthesis; L-valine biosynthesis; L-valine from pyruvate: step 3/4. In terms of biological role, functions in the biosynthesis of branched-chain amino acids. Catalyzes the dehydration of (2R,3R)-2,3-dihydroxy-3-methylpentanoate (2,3-dihydroxy-3-methylvalerate) into 2-oxo-3-methylpentanoate (2-oxo-3-methylvalerate) and of (2R)-2,3-dihydroxy-3-methylbutanoate (2,3-dihydroxyisovalerate) into 2-oxo-3-methylbutanoate (2-oxoisovalerate), the penultimate precursor to L-isoleucine and L-valine, respectively. The protein is Dihydroxy-acid dehydratase of Akkermansia muciniphila (strain ATCC BAA-835 / DSM 22959 / JCM 33894 / BCRC 81048 / CCUG 64013 / CIP 107961 / Muc).